Here is a 171-residue protein sequence, read N- to C-terminus: Moubatin (171 aa).

A signal peptide spans 1–15; sequence MMLVLTTLIFSFSAS. 3 disulfides stabilise this stretch: C23–C144, C55–C166, and C118–C145.

Belongs to the calycin superfamily. Lipocalin family. The N-terminus is blocked. Expressed in salivary glands.

It localises to the secreted. In terms of biological role, tick salivary platelet aggregation inhibitor that plays an important part in the anti-hemostatic strategy of ticks. Acts by scavenging thromboxane A2 (TXA2), a potent inducer of platelet aggregation and blood vessel constriction. As a consequence, is a specific inhibitor of collagen-induced platelet aggregation. In addition, it also acts as a potent inhibitor of TXA2-mediated vasoconstriction. Has also been found to bind leukotriene B4 (LTB4) (which also derives from arachidonic acid, as TXA2) with affinities in the nanomolar range. It does not interact with complement protein C5. The polypeptide is Moubatin (Ornithodoros moubata (Soft tick)).